The primary structure comprises 1111 residues: Cellulose synthase-like protein D4 (1111 aa).

Disordered regions lie at residues 1 to 26 (MAST…KFAR) and 175 to 202 (DYSS…MMKR). Polar residues predominate over residues 192 to 202 (GNNNNMSMMKR). 2 consecutive transmembrane segments (helical) span residues 266–286 (AIIS…CFFL) and 297–317 (AIWL…SWIL). Active-site residues include aspartate 397 and aspartate 809. 6 helical membrane passes run 891–911 (LFLI…QFIV), 914–934 (LSIS…GLAV), 963–983 (LYAV…SFTL), 1007–1027 (LMIP…VAFI), 1040–1060 (LIGG…FAKG), and 1070–1090 (TIVF…WTAI).

Belongs to the glycosyltransferase 2 family. Plant cellulose synthase-like D subfamily.

The protein localises to the golgi apparatus membrane. Thought to be a Golgi-localized beta-glycan synthase that polymerize the backbones of noncellulosic polysaccharides (hemicelluloses) of plant cell wall. The chain is Cellulose synthase-like protein D4 (CSLD4) from Arabidopsis thaliana (Mouse-ear cress).